The following is a 169-amino-acid chain: Thaumatin-like pathogenesis-related protein 4 (169 aa).

The N-terminal stretch at 1-21 (MATSSTVLFLLLAVFAASASA) is a signal peptide.

Belongs to the thaumatin family.

Associated with resistance against stem rust fungi. This is Thaumatin-like pathogenesis-related protein 4 (RASTL-4) from Avena sativa (Oat).